Consider the following 902-residue polypeptide: HTH-type transcriptional regulator MalT (902 aa).

39-46 contributes to the ATP binding site; the sequence is SPAGYGKT. The region spanning 832–897 is the HTH luxR-type domain; that stretch reads ELVRTSPLTQ…EAIVTAENLL (66 aa). A DNA-binding region (H-T-H motif) is located at residues 856 to 875; that stretch reads NEQIAQELDVAGTTIKTHIR.

Belongs to the MalT family. Monomer in solution. Oligomerizes to an active state in the presence of the positive effectors ATP and maltotriose.

Activated by ATP and maltotriose, which are both required for DNA binding. Positively regulates the transcription of the maltose regulon whose gene products are responsible for uptake and catabolism of malto-oligosaccharides. Specifically binds to the promoter region of its target genes, recognizing a short DNA motif called the MalT box. The chain is HTH-type transcriptional regulator MalT from Vibrio parahaemolyticus serotype O3:K6 (strain RIMD 2210633).